A 490-amino-acid polypeptide reads, in one-letter code: Beta-N-acetyl-D-glucosaminide beta-1,4-N-acetylglucosaminyl-transferase (490 aa).

Over 1 to 30 (MYLVVCWGRVTGNMISTRHCFSRCKSRSVR) the chain is Cytoplasmic. A helical; Signal-anchor for type II membrane protein transmembrane segment spans residues 31 to 50 (VIKATAMLFVAAMLFLALHM). Asparagine 51, asparagine 82, asparagine 441, asparagine 459, and asparagine 485 each carry an N-linked (GlcNAc...) asparagine glycan. Residues 51–490 (NFSHEASQQN…YLTGNFTIIS (440 aa)) are Lumenal-facing.

It belongs to the glycosyltransferase 7 family.

Its subcellular location is the golgi apparatus membrane. It carries out the reaction an N-acetyl-beta-D-glucosaminyl derivative + UDP-N-acetyl-alpha-D-glucosamine = an N-acetyl-beta-D-glucosaminyl-(1-&gt;4)-N-acetyl-beta-D-glucosaminyl derivative + UDP + H(+). It participates in protein modification; protein glycosylation. The sequence is that of Beta-N-acetyl-D-glucosaminide beta-1,4-N-acetylglucosaminyl-transferase (GNT) from Lymnaea stagnalis (Great pond snail).